The following is a 571-amino-acid chain: DNA primase (571 aa).

The CHC2-type zinc finger occupies 20-44 (CPFHKEKTPSFQVDTEKGYYHCFGC). The Toprim domain occupies 229-309 (AELVVVEGYM…KFRVRATSVP (81 aa)). The Mg(2+) site is built by Glu-235, Asp-280, and Asp-282.

The protein belongs to the DnaG primase family. In terms of assembly, monomer. Interacts with DnaB. Zn(2+) serves as cofactor. It depends on Mg(2+) as a cofactor.

The enzyme catalyses ssDNA + n NTP = ssDNA/pppN(pN)n-1 hybrid + (n-1) diphosphate.. Functionally, RNA polymerase that catalyzes the synthesis of short RNA molecules used as primers for DNA polymerase during DNA replication. The sequence is that of DNA primase from Deinococcus radiodurans (strain ATCC 13939 / DSM 20539 / JCM 16871 / CCUG 27074 / LMG 4051 / NBRC 15346 / NCIMB 9279 / VKM B-1422 / R1).